The primary structure comprises 331 residues: FMRFamide-related neuropeptides (331 aa).

Positions 1–25 are cleaved as a signal peptide; that stretch reads MRCWSPCSLLVVIVIYCLSSHTSEA. Residues 26 to 65 constitute a propeptide that is removed on maturation; that stretch reads FDLAQACVESQRLSLLPICDTIFAVQQEGVQQSADDGMRS. Phenylalanine amide occurs at positions 71 and 83. Residues 86-94 constitute a propeptide that is removed on maturation; the sequence is NVPDLPFED. Phenylalanine 100 is modified (phenylalanine amide). The propeptide occupies 103–168; sequence AAPQLDELLK…YIDDVEDSDV (66 aa). Positions 122-158 are disordered; that stretch reads QKADETSVRRKRSTDAAPQNNAENPEQKNDSAKITKR. A compositionally biased stretch (basic and acidic residues) spans 146–158; that stretch reads PEQKNDSAKITKR. Phenylalanine 174 and phenylalanine 181 each carry phenylalanine amide. Positions 184–194 are excised as a propeptide; it reads NPSDVGNKLTE. Phenylalanine 200 is modified (phenylalanine amide). A propeptide spanning residues 203 to 205 is cleaved from the precursor; that stretch reads DPE. A Phenylalanine amide modification is found at phenylalanine 211. Positions 214-216 are excised as a propeptide; it reads SDD. The residue at position 222 (phenylalanine 222) is a Phenylalanine amide. A propeptide spanning residues 225-236 is cleaved from the precursor; sequence NPSDAEDELEED. A Phenylalanine amide modification is found at phenylalanine 242. Residues 245-254 constitute a propeptide that is removed on maturation; sequence GGEDDEEEAE. The residue at position 260 (phenylalanine 260) is a Phenylalanine amide. Residues 263–265 constitute a propeptide that is removed on maturation; sequence DPE. Phenylalanine 271 is subject to Phenylalanine amide. The propeptide occupies 274–277; the sequence is SGED. The segment covering 279–296 has biased composition (basic and acidic residues); that stretch reads RFMRFGRNPDEQEADKRF. The disordered stretch occupies residues 279-310; that stretch reads RFMRFGRNPDEQEADKRFMRFGRGGEDDEVST. Phenylalanine 283 carries the post-translational modification Phenylalanine amide. Positions 286–293 are excised as a propeptide; that stretch reads NPDEQEAD. Phenylalanine 299 carries the phenylalanine amide modification. The propeptide occupies 302–312; sequence GGEDDEVSTED. Phenylalanine 318 carries the post-translational modification Phenylalanine amide. Residues 321-331 constitute a propeptide that is removed on maturation; sequence SADKCKGCLEG.

It belongs to the FARP (FMRFamide related peptide) family.

The protein resides in the secreted. In terms of biological role, excitatory neurotransmitters that directly modulate chromatophore function by activating chromatophore expansion at the chromatophore neuromuscular junction. The polypeptide is FMRFamide-related neuropeptides (Doryteuthis opalescens (California market squid)).